The chain runs to 406 residues: ATP-dependent RNA helicase eIF4A (406 aa).

The Q motif signature appears at 25-53 (DSFDAMDLKPELLRGVYAYGFERPSAIQQ). Residues 56–226 (ILPIIKGNDV…TKFMRDPVRI (171 aa)) form the Helicase ATP-binding domain. Residue 69–76 (AQSGTGKT) coordinates ATP. Positions 174 to 177 (DEAD) match the DEAD box motif. One can recognise a Helicase C-terminal domain in the interval 237–398 (GIKQFYIAVE…EMPMNVAGKF (162 aa)).

This sequence belongs to the DEAD box helicase family. eIF4A subfamily. In terms of assembly, component of the eIF4F complex, which composition varies with external and internal environmental conditions. It is composed of at least eIF4A, eIF4E and eIF4G.

Its subcellular location is the cytoplasm. It catalyses the reaction ATP + H2O = ADP + phosphate + H(+). In terms of biological role, ATP-dependent RNA helicase which is a subunit of the eIF4F complex involved in cap recognition and is required for mRNA binding to ribosome. In the current model of translation initiation, eIF4A unwinds RNA secondary structures in the 5'-UTR of mRNAs which is necessary to allow efficient binding of the small ribosomal subunit, and subsequent scanning for the initiator codon. In Aspergillus fumigatus (strain ATCC MYA-4609 / CBS 101355 / FGSC A1100 / Af293) (Neosartorya fumigata), this protein is ATP-dependent RNA helicase eIF4A (tif1).